Here is a 1072-residue protein sequence, read N- to C-terminus: MEQQQSKNIVHVSKLFVCTAVDCKDDIEEKFERSFVTLQMQISGLSDKEMHDMLSQAVCKDKQHEEISIGFLYIMLTDPSMAPKTYRDVTLVSRDGMNGIVTNLTFLVAEKYTKLTEVARRQLIWLLREFVKHQVLSVENVIWNCLRQAGGGDVSSRNLFLIESLLDIFIEFRTWLEGNPFLVQSTVYSFVRLIEDHANPALMSLRQKEVKFTISLIRERFHDIIPLGRDFVRLLQNVARIPEFEQLWRDLIFNPKILHQTFNGIWQLLHIRTSRRFLQCRLLPEMERKISFLASSVKFGNQKRYQDWFQEKYFATPESHSLRSDLIRFIINVIHPTNDMLCSDIIPRWAIIGWLISSCTNPIASANAKLSLFYDWLFFDPAKDNIMNIEPGILVMYHSIRNHPFVSSTLLDFLCRITKNFFVKHEDKIRIGVYNSLKLILEKQVIPNLQPLFESPKLDRELRNLIRDNFREFLSPSANLGQLLYPSMHPAQGYIIKKESDQRILHCENMDLHETGLINTSGSNISMLDEDIKISLVPTDLEIESVFSDETAENLKRVHNIEENTDDDDDLPLSKVRLKEKPRVELAESIAESFDAFVTKRNSYTWEAFLKDFRPLPASAFEEFQLNYVISNTVLILRETLPQQNIFSESKTEEKHLAKSISYPLYGLFRFLYENDEKSKKPFQILLSEICEGIPEIGYLLLYFMKIYCKLQTRKNSQHSYQFKTTIYRQICDAVDEKIGNCLIRDLDLLEKENTNIFLWLLPDIYREFKSIATNNTDLLRITLRCIDAKNVRDILYSVAQGKLTIFKQDGLIDCIRESLDFETYEQFCLWQIVQAHDVPLRCIQDLLPELEAGSHPEALSHFLLLLKNEEPTNEIIRLMLSRETKSKGDPFVTSALRFWCQRYEEKLSEIIASLLTSKYPSSSPNKRKRPPKGISVSTSTPSADQVLNHLEHYRRSCRHGTGTGLYVHDMMQRALQSAYSHSNDSTKKQFSDLFALAAEEDTTVGRRGGSGRGRKQPGSKKDVSNHGTSKKNAEMVKTIYSSDENSSEEDWSKSKMTQTAKRRKKANNDSD.

Disordered stretches follow at residues 920–943 (YPSS…STPS) and 1002–1072 (DTTV…NDSD). Serine 1042, serine 1043, serine 1047, and serine 1048 each carry phosphoserine.

It belongs to the Integrator subunit 3 family. As to quaternary structure, belongs to the multiprotein complex Integrator, at least composed of IntS1, IntS2, IntS3, IntS4, omd/IntS5, IntS6, defl/IntS7, IntS8, IntS9, IntS10, IntS11, IntS12, asun/IntS13, IntS14 and IntS15. The core complex associates with protein phosphatase 2A subunits mts/PP2A and Pp2A-29B, to form the Integrator-PP2A (INTAC) complex.

The protein localises to the nucleus. Its subcellular location is the cytoplasm. In terms of biological role, component of the integrator complex, a multiprotein complex that terminates RNA polymerase II (Pol II) transcription in the promoter-proximal region of genes. The integrator complex provides a quality checkpoint during transcription elongation by driving premature transcription termination of transcripts that are unfavorably configured for transcriptional elongation: the complex terminates transcription by (1) catalyzing dephosphorylation of the C-terminal domain (CTD) of Pol II subunit Polr2A/Rbp1 and Spt5, and (2) degrading the exiting nascent RNA transcript via endonuclease activity. The integrator complex is also involved in the 3'-end processing of the U7 snRNA, and also the spliceosomal snRNAs U1, U2, U4 and U5. The polypeptide is Integrator complex subunit 3 homolog (IntS3) (Drosophila yakuba (Fruit fly)).